The sequence spans 523 residues: MSYDPADLPPRTGSNLPEMSVGDLARALKRTVEDAYGYVRVRGEISQPKRHSSGHVYLRLKDETAVLEAVCWKGVAARLSVRPEEGMEVVCTGRLTTYPGRSQYQLVIETMELAGEGALLKMLEERKRRLAAEGLFAPERKKPLPFLPEVIGVVTSPTGAVIRDILHRLADRFPRHVLLWPVAVQGEGAADQVARAIAGFNAIAPGGPVPRPDLIIVARGGGSLEDLMPFNEEAVVRAAAASAIPLISAVGHETDTTLIDFASDRRAPTPTAAAEMAVPVRTELLAQVLDDGRRLHQCLSRAIDTRRSHVEGLGRGLGDPRALLEGCIQRLDDRAERLELSLRTGLERRHAAVQQLGIRLRHPREVIGLAAARADAAGRALRAGFDRAVTVEQGRFHRVADRLSPLPLRRQIDAGRDRLDALPPRLAQAHARRLDQAGQRLVALGQLLESYSYKGVLERGFVLVADAEGRPVTRAADTAPGQPVALRFADGTVGAVVDGAAPGASPAARTRAGKAKADQGSLF.

Residues P502–F523 form a disordered region.

This sequence belongs to the XseA family. In terms of assembly, heterooligomer composed of large and small subunits.

It is found in the cytoplasm. The enzyme catalyses Exonucleolytic cleavage in either 5'- to 3'- or 3'- to 5'-direction to yield nucleoside 5'-phosphates.. Functionally, bidirectionally degrades single-stranded DNA into large acid-insoluble oligonucleotides, which are then degraded further into small acid-soluble oligonucleotides. The sequence is that of Exodeoxyribonuclease 7 large subunit from Rhodospirillum centenum (strain ATCC 51521 / SW).